We begin with the raw amino-acid sequence, 84 residues long: Putative membrane protein insertion efficiency factor (84 aa).

Positions 63–84 (LGGSGYDPPPPPKTPRKWKCEE) are disordered.

Belongs to the UPF0161 family.

Its subcellular location is the cell inner membrane. In terms of biological role, could be involved in insertion of integral membrane proteins into the membrane. In Caulobacter sp. (strain K31), this protein is Putative membrane protein insertion efficiency factor.